We begin with the raw amino-acid sequence, 204 residues long: Large ribosomal subunit protein eL15A (204 aa).

The disordered stretch occupies residues 164-185 (LTATGKKSRGINKGHKFNNTKA). Positions 169–185 (KKSRGINKGHKFNNTKA) are enriched in basic residues.

It belongs to the eukaryotic ribosomal protein eL15 family. In terms of assembly, component of the large ribosomal subunit (LSU). Mature yeast ribosomes consist of a small (40S) and a large (60S) subunit. The 40S small subunit contains 1 molecule of ribosomal RNA (18S rRNA) and 33 different proteins (encoded by 57 genes). The large 60S subunit contains 3 rRNA molecules (25S, 5.8S and 5S rRNA) and 46 different proteins (encoded by 81 genes).

Its subcellular location is the cytoplasm. Its function is as follows. Component of the ribosome, a large ribonucleoprotein complex responsible for the synthesis of proteins in the cell. The small ribosomal subunit (SSU) binds messenger RNAs (mRNAs) and translates the encoded message by selecting cognate aminoacyl-transfer RNA (tRNA) molecules. The large subunit (LSU) contains the ribosomal catalytic site termed the peptidyl transferase center (PTC), which catalyzes the formation of peptide bonds, thereby polymerizing the amino acids delivered by tRNAs into a polypeptide chain. The nascent polypeptides leave the ribosome through a tunnel in the LSU and interact with protein factors that function in enzymatic processing, targeting, and the membrane insertion of nascent chains at the exit of the ribosomal tunnel. The chain is Large ribosomal subunit protein eL15A from Saccharomyces cerevisiae (strain ATCC 204508 / S288c) (Baker's yeast).